A 423-amino-acid polypeptide reads, in one-letter code: Glutamyl-tRNA(Gln) amidotransferase subunit A (423 aa).

Catalysis depends on charge relay system residues Lys-28 and Ser-103. Residue Ser-127 is the Acyl-ester intermediate of the active site.

This sequence belongs to the amidase family. GatA subfamily. In terms of assembly, heterotrimer of A, B and C subunits.

It catalyses the reaction L-glutamyl-tRNA(Gln) + L-glutamine + ATP + H2O = L-glutaminyl-tRNA(Gln) + L-glutamate + ADP + phosphate + H(+). Allows the formation of correctly charged Gln-tRNA(Gln) through the transamidation of misacylated Glu-tRNA(Gln) in organisms which lack glutaminyl-tRNA synthetase. The reaction takes place in the presence of glutamine and ATP through an activated gamma-phospho-Glu-tRNA(Gln). The protein is Glutamyl-tRNA(Gln) amidotransferase subunit A of Halobacterium salinarum (strain ATCC 700922 / JCM 11081 / NRC-1) (Halobacterium halobium).